A 359-amino-acid polypeptide reads, in one-letter code: Methyltransferase eqxD (359 aa).

Residues 198 to 199 (GG), Asp224, 248 to 249 (SF), Arg264, and Arg265 contribute to the S-adenosyl-L-methionine site.

This sequence belongs to the class I-like SAM-binding methyltransferase superfamily. Cation-independent O-methyltransferase family.

It catalyses the reaction trichosetin + S-adenosyl-L-methionine = equisetin + S-adenosyl-L-homocysteine + H(+). It functions in the pathway mycotoxin biosynthesis. Functionally, methyltransferase; part of the gene cluster that mediates the biosynthesis of equisetin, a trans-fused decalin-containing tetramic acid with antimicrobial activity. The PKS module of eqxS together with the enoylreductase eqxC catalyze the formation of the polyketide unit which is then conjugated to L-serine by the condensation domain of the eqxS NRPS module. Activity of the Dieckmann cyclase domain (RED) results in release of the Dieckmann product intermediate. Diels-Alderase eqx3 is involved in endo-selective Diels-Alder cycloaddition to form the decalin ring, leading to the production of N-desmethylequisetin also called trichosetin. Subsequent N-methylation is carried out by eqxD to give equisetin. This chain is Methyltransferase eqxD, found in Fusarium heterosporum.